The following is a 600-amino-acid chain: NADH-quinone oxidoreductase subunit C/D (600 aa).

Positions 1 to 190 are NADH dehydrogenase I subunit C; sequence MVNNMTDLTA…DPFELTKAKQ (190 aa). The segment at 214–600 is NADH dehydrogenase I subunit D; the sequence is DFMFLNLGPN…IDFVMSDVDR (387 aa).

It in the N-terminal section; belongs to the complex I 30 kDa subunit family. In the C-terminal section; belongs to the complex I 49 kDa subunit family. As to quaternary structure, NDH-1 is composed of 13 different subunits. Subunits NuoB, CD, E, F, and G constitute the peripheral sector of the complex.

The protein resides in the cell inner membrane. It catalyses the reaction a quinone + NADH + 5 H(+)(in) = a quinol + NAD(+) + 4 H(+)(out). Functionally, NDH-1 shuttles electrons from NADH, via FMN and iron-sulfur (Fe-S) centers, to quinones in the respiratory chain. The immediate electron acceptor for the enzyme in this species is believed to be ubiquinone. Couples the redox reaction to proton translocation (for every two electrons transferred, four hydrogen ions are translocated across the cytoplasmic membrane), and thus conserves the redox energy in a proton gradient. The protein is NADH-quinone oxidoreductase subunit C/D of Citrobacter koseri (strain ATCC BAA-895 / CDC 4225-83 / SGSC4696).